A 70-amino-acid polypeptide reads, in one-letter code: Large ribosomal subunit protein eL38 (70 aa).

Residue Lys-4 forms a Glycyl lysine isopeptide (Lys-Gly) (interchain with G-Cter in SUMO2) linkage. Lys-9 is subject to N6-acetyllysine; alternate. Lys-9 is covalently cross-linked (Glycyl lysine isopeptide (Lys-Gly) (interchain with G-Cter in SUMO2); alternate). At Lys-67 the chain carries N6-acetyllysine.

It belongs to the eukaryotic ribosomal protein eL38 family. In terms of assembly, component of the large ribosomal subunit.

It localises to the cytoplasm. Component of the large ribosomal subunit. The ribosome is a large ribonucleoprotein complex responsible for the synthesis of proteins in the cell. The protein is Large ribosomal subunit protein eL38 (RPL38) of Macaca fascicularis (Crab-eating macaque).